Consider the following 423-residue polypeptide: CDP-diacylglycerol--serine O-phosphatidyltransferase 2 (423 aa).

A run of 9 helical transmembrane segments spans residues 38–58 (PHTI…SGAL), 77–97 (WAMI…TILI), 103–123 (VWRL…FLLF), 195–215 (LLLW…RHML), 222–242 (WWDS…WAGM), 294–314 (FVQV…TFFL), 319–339 (WIPP…LIAI), 359–379 (GAFC…CMKF), and 390–410 (TWLI…LLAW).

The protein belongs to the CDP-alcohol phosphatidyltransferase class-I family.

The protein resides in the endoplasmic reticulum membrane. It catalyses the reaction a CDP-1,2-diacyl-sn-glycerol + L-serine = a 1,2-diacyl-sn-glycero-3-phospho-L-serine + CMP + H(+). Its pathway is phospholipid metabolism; phosphatidylethanolamine biosynthesis; phosphatidylethanolamine from CDP-diacylglycerol: step 1/2. In terms of biological role, catalyzes a base-exchange reaction in which the polar head group of phosphatidylethanolamine (PE) or phosphatidylcholine (PC) is replaced by L-serine. The protein is CDP-diacylglycerol--serine O-phosphatidyltransferase 2 (PSS2) of Oryza sativa subsp. japonica (Rice).